Reading from the N-terminus, the 376-residue chain is N-acetyldiaminopimelate deacetylase (376 aa).

Residue Asp70 is part of the active site. Residue Glu129 is the Proton acceptor of the active site.

It belongs to the peptidase M20A family. N-acetyldiaminopimelate deacetylase subfamily.

The catalysed reaction is N-acetyl-(2S,6S)-2,6-diaminopimelate + H2O = (2S,6S)-2,6-diaminopimelate + acetate. The protein operates within amino-acid biosynthesis; L-lysine biosynthesis via DAP pathway; LL-2,6-diaminopimelate from (S)-tetrahydrodipicolinate (acetylase route): step 3/3. In terms of biological role, catalyzes the conversion of N-acetyl-diaminopimelate to diaminopimelate and acetate. The polypeptide is N-acetyldiaminopimelate deacetylase (Geobacillus sp. (strain WCH70)).